Consider the following 919-residue polypeptide: Synphilin-1 (919 aa).

Disordered regions lie at residues 80–99 (SPLK…DQKN), 108–140 (GGES…STSL), and 287–313 (SSAA…EERS). The segment covering 299–308 (SGLNRTSSQG) has biased composition (polar residues). ANK repeat units lie at residues 349-380 (NGNN…CLNE), 384-413 (EKLT…AIAE), 419-448 (DFPS…EQGI), and 456-485 (DGNS…NVTM). A coiled-coil region spans residues 515–552 (CMSLASQVVKLTKQLKEQTVERVTLQNQLQQFLEAQKS). Disordered regions lie at residues 549–615 (AQKS…KDED), 666–713 (RLRQ…SMDS), and 728–919 (SGGR…NKAA). The segment covering 555-571 (KSLPSSPSSPSSPASRK) has biased composition (low complexity). The ANK 5 repeat unit spans residues 603 to 632 (ASSRARPKAKDEDSDKILRQLLGKEISENV). Over residues 667–685 (LRQLMQRSLSESDTDSNNS) the composition is skewed to low complexity. Over residues 686–700 (EDPKTTPVRKADRPR) the composition is skewed to basic and acidic residues. Residues 699-729 (PRPQPIVESVESMDSAESLHLMIKKHTLASG) form an ANK 6 repeat. The segment covering 774–785 (PSGDPQQPSPDS) has biased composition (low complexity). Over residues 833-842 (NGEKDKDKGR) the composition is skewed to basic and acidic residues. Over residues 844–854 (LQRTSTSNESG) the composition is skewed to polar residues. Residues 874–886 (NQNNNNNYQAANQ) show a composition bias toward low complexity.

As to quaternary structure, homodimer. Heterodimer of isoform 1 and isoform 2. Interacts with SIAH1, SIAH2, SNCA, RNF19A and PRKN. Isoform 2 has a strong tendency to form aggregates and can sequester isoform 1. Ubiquitinated; mediated by SIAH1, SIAH2 or RNF19A and leading to its subsequent proteasomal degradation. In the absence of proteasomal degradation, ubiquitinated SNCAIP accumulates in cytoplasmic inclusion bodies. Isoform 2 is subject to limited ubiquitination that does not lead to proteasomal degradation. As to expression, detected in brain (at protein level). Widely expressed, with highest levels in brain, heart and placenta.

It localises to the cytoplasm. Isoform 2 inhibits the ubiquitin ligase activity of SIAH1 and inhibits proteasomal degradation of target proteins. Isoform 2 inhibits autoubiquitination and proteasomal degradation of SIAH1, and thereby increases cellular levels of SIAH. Isoform 2 modulates SNCA monoubiquitination by SIAH1. In Homo sapiens (Human), this protein is Synphilin-1 (SNCAIP).